Here is a 442-residue protein sequence, read N- to C-terminus: NAD(P)H sulfur oxidoreductase (CoA-dependent) (442 aa).

13–14 (AA) is a binding site for FAD. Arg24 lines the CoA pocket. Residues 35 to 36 (EA) and 42 to 44 (HAP) contribute to the FAD site. Residues 41–45 (SHAPC), 62–63 (HY), and Arg72 each bind CoA. The active-site Redox-active is the Cys45. FAD-binding residues include Val82, Asp280, and Ala298. Residues Asn302 and Lys358 each contribute to the CoA site. Tyr422 lines the FAD pocket. CoA contacts are provided by Trp430 and Arg438.

The protein belongs to the class-III pyridine nucleotide-disulfide oxidoreductase family. As to quaternary structure, homodimer. It depends on FAD as a cofactor.

Its subcellular location is the cytoplasm. The enzyme catalyses hydrogen sulfide + NADP(+) = sulfur + NADPH. It carries out the reaction hydrogen sulfide + NAD(+) = sulfur + NADH. It catalyses the reaction NADP(+) + 2 CoA = CoA-disulfide + NADPH + H(+). The catalysed reaction is NAD(+) + 2 CoA = CoA-disulfide + NADH + H(+). In terms of biological role, catalyzes the CoA-dependent reduction of elemental sulfur (S(0)) to produce hydrogen sulfide. Can use both NADPH and NADH, but shows a preference for NADPH. May enable S(0) to be used, via sulfide, for iron-sulfur cluster synthesis by SipA. Also shows coenzyme A disulfide reductase (CoADR) activity with both NADH and NADPH. However, CoADR specific activity is about 20-fold lower than the sulfur reduction assay and CoADR activity appears to be an artifactual side reaction and is not thought to have any physiological relevance. Also shows NAD(P)H oxidase activity with both NADH and NADPH. In Pyrococcus furiosus (strain ATCC 43587 / DSM 3638 / JCM 8422 / Vc1), this protein is NAD(P)H sulfur oxidoreductase (CoA-dependent).